A 239-amino-acid chain; its full sequence is Purine nucleoside phosphorylase DeoD-type (239 aa).

Residue His-5 coordinates a purine D-ribonucleoside. Phosphate-binding positions include Gly-21, Arg-25, Arg-44, and 88-91 (RVGS). Residues 180–182 (EME) and 204–205 (SD) each bind a purine D-ribonucleoside. The Proton donor role is filled by Asp-205.

This sequence belongs to the PNP/UDP phosphorylase family. Homohexamer; trimer of homodimers.

The catalysed reaction is a purine D-ribonucleoside + phosphate = a purine nucleobase + alpha-D-ribose 1-phosphate. It catalyses the reaction a purine 2'-deoxy-D-ribonucleoside + phosphate = a purine nucleobase + 2-deoxy-alpha-D-ribose 1-phosphate. Functionally, catalyzes the reversible phosphorolytic breakdown of the N-glycosidic bond in the beta-(deoxy)ribonucleoside molecules, with the formation of the corresponding free purine bases and pentose-1-phosphate. The sequence is that of Purine nucleoside phosphorylase DeoD-type from Klebsiella pneumoniae (strain 342).